The sequence spans 293 residues: Methoxy mycolic acid synthase MmaA3 (293 aa).

S-adenosyl-L-methionine-binding positions include 39–40, 78–80, 100–105, 129–130, and I142; these read YS, GCG, TLSKNQ, and WA. C275 is a catalytic residue.

The protein belongs to the CFA/CMAS family.

It participates in lipid metabolism; mycolic acid biosynthesis. In terms of biological role, involved in the biosynthesis of methoxymycolic acid. It catalyzes the O-methylation of the hydroxy group of the hydroxymycolate to form a methyl ether. In Mycobacterium bovis (strain ATCC BAA-935 / AF2122/97), this protein is Methoxy mycolic acid synthase MmaA3 (cmaB).